We begin with the raw amino-acid sequence, 102 residues long: Small ribosomal subunit protein uS10 (102 aa).

This sequence belongs to the universal ribosomal protein uS10 family. As to quaternary structure, part of the 30S ribosomal subunit.

Involved in the binding of tRNA to the ribosomes. In Staphylococcus aureus (strain JH9), this protein is Small ribosomal subunit protein uS10.